A 1055-amino-acid polypeptide reads, in one-letter code: Cell-division control histidine kinase PdhS (1055 aa).

An important for polar localization region spans residues 1 to 626 (MSGSYPFIDI…RANGSEEPVD (626 aa)). The interval 419–439 (DDSPVATLPKPPLDIAPTPGR) is disordered. The segment at 627 to 1055 (AHLNAISWRE…AFPPTRVLAD (429 aa)) is interaction with DivK. The PAS domain maps to 679-750 (HVEELKTILD…YLHGLSGNGV (72 aa)). Residues 822–1051 (RISHEIRTPL…VVEIAFPPTR (230 aa)) form the Histidine kinase domain. H825 is modified (phosphohistidine; by autocatalysis).

As to quaternary structure, interacts with DivK.

It localises to the cytoplasm. It catalyses the reaction ATP + protein L-histidine = ADP + protein N-phospho-L-histidine.. Functionally, functions as a polar differentiation marker. Essential protein that, by localizing in the old pole of dividing cells, controls cell division and maturation, probably through control of DivK phosphorylation status and cellular distribution, which in turn regulates CtrA, a transcriptional regulator of the minB operon. The asymmetrical localization of this protein is probably required for cells to enter a new division cycle. The protein is Cell-division control histidine kinase PdhS (pdhS) of Brucella anthropi (strain ATCC 49188 / DSM 6882 / CCUG 24695 / JCM 21032 / LMG 3331 / NBRC 15819 / NCTC 12168 / Alc 37) (Ochrobactrum anthropi).